A 518-amino-acid polypeptide reads, in one-letter code: Protein nucleotidyltransferase YdiU (518 aa).

Residues 1–10 are compositionally biased toward basic and acidic residues; sequence MTHLQFDNRL. The tract at residues 1 to 23 is disordered; the sequence is MTHLQFDNRLRAQLPGDPEQGPR. Residues glycine 100, glycine 102, arginine 103, lysine 123, aspartate 135, glycine 136, arginine 193, and arginine 200 each coordinate ATP. Aspartate 270 functions as the Proton acceptor in the catalytic mechanism. Mg(2+) contacts are provided by asparagine 271 and aspartate 280. An ATP-binding site is contributed by aspartate 280.

The protein belongs to the SELO family. It depends on Mg(2+) as a cofactor. Mn(2+) is required as a cofactor.

The enzyme catalyses L-seryl-[protein] + ATP = 3-O-(5'-adenylyl)-L-seryl-[protein] + diphosphate. The catalysed reaction is L-threonyl-[protein] + ATP = 3-O-(5'-adenylyl)-L-threonyl-[protein] + diphosphate. It catalyses the reaction L-tyrosyl-[protein] + ATP = O-(5'-adenylyl)-L-tyrosyl-[protein] + diphosphate. It carries out the reaction L-histidyl-[protein] + UTP = N(tele)-(5'-uridylyl)-L-histidyl-[protein] + diphosphate. The enzyme catalyses L-seryl-[protein] + UTP = O-(5'-uridylyl)-L-seryl-[protein] + diphosphate. The catalysed reaction is L-tyrosyl-[protein] + UTP = O-(5'-uridylyl)-L-tyrosyl-[protein] + diphosphate. Its function is as follows. Nucleotidyltransferase involved in the post-translational modification of proteins. It can catalyze the addition of adenosine monophosphate (AMP) or uridine monophosphate (UMP) to a protein, resulting in modifications known as AMPylation and UMPylation. The chain is Protein nucleotidyltransferase YdiU from Xanthomonas campestris pv. campestris (strain B100).